The chain runs to 38 residues: Photosystem II reaction center protein L (38 aa).

The helical transmembrane segment at 17–37 (SLYWGLLLIFVLAVSFSNYFF) threads the bilayer.

Belongs to the PsbL family. As to quaternary structure, PSII is composed of 1 copy each of membrane proteins PsbA, PsbB, PsbC, PsbD, PsbE, PsbF, PsbH, PsbI, PsbJ, PsbK, PsbL, PsbM, PsbT, PsbX, PsbY, PsbZ, Psb30/Ycf12, at least 3 peripheral proteins of the oxygen-evolving complex and a large number of cofactors. It forms dimeric complexes.

Its subcellular location is the plastid membrane. Its function is as follows. One of the components of the core complex of photosystem II (PSII). PSII is a light-driven water:plastoquinone oxidoreductase that uses light energy to abstract electrons from H(2)O, generating O(2) and a proton gradient subsequently used for ATP formation. It consists of a core antenna complex that captures photons, and an electron transfer chain that converts photonic excitation into a charge separation. This subunit is found at the monomer-monomer interface and is required for correct PSII assembly and/or dimerization. The polypeptide is Photosystem II reaction center protein L (Aneura mirabilis (Parasitic liverwort)).